The primary structure comprises 124 residues: Fluoride-specific ion channel FluC 2 (124 aa).

Transmembrane regions (helical) follow at residues 9-29 (LGIFLAAMLGGLVRYLVSTWL), 34-54 (DFPWGTLFVNYLGIFCLIYLV), 67-87 (LILALGTGFCGGLTTFSSLML), and 99-119 (LSLILYLLLSIGGGLLLAYYL). Na(+)-binding residues include G77 and T80.

Belongs to the fluoride channel Fluc/FEX (TC 1.A.43) family.

The protein localises to the cell membrane. The enzyme catalyses fluoride(in) = fluoride(out). Na(+) is not transported, but it plays an essential structural role and its presence is essential for fluoride channel function. Functionally, fluoride-specific ion channel. Important for reducing fluoride concentration in the cell, thus reducing its toxicity. This Streptococcus pneumoniae serotype 4 (strain ATCC BAA-334 / TIGR4) protein is Fluoride-specific ion channel FluC 2.